Reading from the N-terminus, the 397-residue chain is Nuclear RNA export factor 5 (397 aa).

Residues 13–92 form the RRM domain; that stretch reads WFKVTIPYGI…IFVSHFTAPY (80 aa). LRR repeat units follow at residues 160–185, 186–209, 210–237, and 238–265; these read ELLS…EKAP, KVKT…VKGL, KLEE…AIRD, and CFPK…ETMK. Residues 280–367 form the NTF2; truncated domain; it reads LVLQFLQQSN…ESQRWWCLLS (88 aa).

It belongs to the NXF family. As to quaternary structure, interacts with NXT1 and NXT2.

The protein resides in the cytoplasm. Its subcellular location is the nucleus. Its function is as follows. Could be involved in the export of mRNA from the nucleus to the cytoplasm. Could also have a role in polarized cytoplasmic transport and localization of mRNA in neurons. In Homo sapiens (Human), this protein is Nuclear RNA export factor 5 (NXF5).